A 709-amino-acid chain; its full sequence is Polyribonucleotide nucleotidyltransferase (709 aa).

Mg(2+) is bound by residues Asp491 and Asp497. The KH domain occupies 557–617 (PKSESFMIPP…ENLQKAKTFI (61 aa)). Positions 641–709 (GERFVGKIKK…KNKVELGLVE (69 aa)) constitute an S1 motif domain.

It belongs to the polyribonucleotide nucleotidyltransferase family. Requires Mg(2+) as cofactor.

It is found in the cytoplasm. It carries out the reaction RNA(n+1) + phosphate = RNA(n) + a ribonucleoside 5'-diphosphate. Involved in mRNA degradation. Catalyzes the phosphorolysis of single-stranded polyribonucleotides processively in the 3'- to 5'-direction. The sequence is that of Polyribonucleotide nucleotidyltransferase from Helicobacter hepaticus (strain ATCC 51449 / 3B1).